The chain runs to 2359 residues: Pre-mRNA-processing-splicing factor 8A (2359 aa).

Residues 1–54 are disordered; the sequence is MWNNNDGMPLAPPGTGGSMMPPPPAAHPSYTALPPPSNPTPPVEPTPEEAEAKL. Residues 33 to 45 are compositionally biased toward pro residues; that stretch reads LPPPSNPTPPVEP. The MPN domain maps to 2127-2258; that stretch reads TYIMPKNILK…LTSYKLTQTG (132 aa).

As to quaternary structure, interacts with CLO.

The protein resides in the nucleus. Functionally, functions as a scaffold that mediates the ordered assembly of spliceosomal proteins and snRNAs. Required for the assembly of the U4/U6-U5 tri-snRNP complex. Required for embryo development. Required for splicing efficiency of COOLAIR introns and usage of the proximal poly(A) site. COOLAIR is a set of long non-coding antisense transcripts produced at the FLOWERING LOCUS C (FLC). COOLAIR initiates just downstream of the major sense transcript poly(A) site and terminates either early or extends into the FLC promoter region. Splicing of COOLAIR by PRP8A is functionally important for FLC regulation. This is Pre-mRNA-processing-splicing factor 8A from Arabidopsis thaliana (Mouse-ear cress).